Consider the following 86-residue polypeptide: Putative pro-MCH-like protein 1 (86 aa).

The NGE-like stretch occupies residues 31–49 (GSVAFPAENGVQDTESTQE). Positions 38 to 62 (ENGVQDTESTQEKRETGDEENSAKF) are disordered. An NEI-like region spans residues 52 to 64 (ETGDEENSAKFPV). The interval 68 to 86 (DFDTLSCMLGRVYQSCWQV) is melanin-concentrating hormone-like.

The protein belongs to the melanin-concentrating hormone family. As to expression, expressed in testis and brain.

This is Putative pro-MCH-like protein 1 (PMCHL1) from Homo sapiens (Human).